A 63-amino-acid polypeptide reads, in one-letter code: Cecropin-1 (63 aa).

Residues 1–21 (MNFNKVFILVAIVIAIFAGQT) form the signal peptide. Positions 22 to 23 (EA) are excised as a propeptide. At Arg-62 the chain carries Arginine amide.

Belongs to the cecropin family.

It is found in the secreted. Functionally, cecropins have lytic and antibacterial activity against several Gram-positive and Gram-negative bacteria. The protein is Cecropin-1 (CEC1) of Ceratitis capitata (Mediterranean fruit fly).